We begin with the raw amino-acid sequence, 499 residues long: MPVSLRFTNTLTRRTEPFQPLKDGQVSIYCCGVTVYDLCHLGHARSYINWDVLRRYLIWSGYAVTFVQNFTDIDDKILKRAAEEGSSMEAVSERNIDAFHADMDALGILRPDRMPRATRCLEGIRTLIAELEAKGAAYSADGDVYFAVMKHAGYGKLSGRDLADQQTNADGRVADAEEARKQHPFDFALWKGAKAGEPSFPSPWGNGRPGWHIECSAMVREELGDTIDIHLGGADLVFPHHENEIAQSEAATGQELARVWLHNGMVNVGGEKMSKSLGNFTTIRALLESGLSAMTLRLFVLQAHYRKPLDFTAEALEAATTGWKGLNAALSLGDLHAEALGWTPAEPMGNDAVVASESSAIDTLLSARQRFSAAMDDDLNSSGALAVLFELARPLRALANRLDRGDAPNHNDDDGQELLQRWLLLRELAAVLGLRLEHPSAPEEESDLDSQSIEAAIDARRLAKQSKDFAEADRIRAELSAQGIELIDKPGGITEWRRG.

C31 contributes to the Zn(2+) binding site. The short motif at 33–43 (VTVYDLCHLGH) is the 'HIGH' region element. Zn(2+)-binding residues include C215, H240, and E244. The 'KMSKS' region signature appears at 272 to 276 (KMSKS). Residue K275 coordinates ATP.

The protein belongs to the class-I aminoacyl-tRNA synthetase family. Monomer. Zn(2+) serves as cofactor.

The protein localises to the cytoplasm. The catalysed reaction is tRNA(Cys) + L-cysteine + ATP = L-cysteinyl-tRNA(Cys) + AMP + diphosphate. The polypeptide is Cysteine--tRNA ligase (Synechococcus sp. (strain WH7803)).